Consider the following 21-residue polypeptide: Peptide Hact-2 (21 aa).

Disulfide bonds link Cys1–Cys18, Cys5–Cys14, and Cys9–Cys20.

Expressed in tentacles.

It is found in the nematocyst. Its subcellular location is the secreted. Peptide of unknown function. Does not exhibit antimicrobial activity against Escherichia coli and Staphylococcus aureus. Promotes cell proliferation of human fibroblast skin cells. Does not exhibit any effect on voltage-gated ion channels, including potassium, sodium, and calcium channels. In Heliofungia actiniformis (Mushroom coral), this protein is Peptide Hact-2.